We begin with the raw amino-acid sequence, 416 residues long: Lysosome-associated membrane glycoprotein 3 (416 aa).

The first 27 residues, 1 to 27 (MPRQLSAAAVLFASLAVILHDGSQMRA), serve as a signal peptide directing secretion. The Lumenal segment spans residues 28–381 (KAFPKTRDYS…NVDECSSDYT (354 aa)). The segment at 135-217 (PPTITPPAHT…ASTVPGSTLA (83 aa)) is disordered. Residues 142-170 (AHTTGTSSSTVNHTTGNATQPSNQTTLPA) are compositionally biased toward polar residues. The span at 188 to 208 (PTHAPGTTAAAHNTTRTAAPA) shows a compositional bias: low complexity. Asn200 is a glycosylation site (N-linked (GlcNAc...) asparagine). Residues Cys237 and Cys274 are joined by a disulfide bond. A glycan (N-linked (GlcNAc...) asparagine) is linked at Asn291. Cys339 and Cys376 form a disulfide bridge. Residues 382-402 (IVLPVIGAIVVGLCLVGMGVY) traverse the membrane as a helical segment. Residues 403–416 (KIRLRCQSSGYQRI) lie on the Cytoplasmic side of the membrane.

It belongs to the LAMP family. In terms of assembly, monomer. Interacts with FURIN.

It localises to the cell surface. The protein localises to the lysosome membrane. The protein resides in the cytoplasmic vesicle membrane. It is found in the early endosome membrane. Its function is as follows. Lysosomal membrane glycoprotein which plays a role in the unfolded protein response (UPR) that contributes to protein degradation and cell survival during proteasomal dysfunction. Plays a role in the process of fusion of the lysosome with the autophagosome, thereby modulating the autophagic process. Promotes hepatocellular lipogenesis through activation of the PI3K/Akt pathway. May also play a role in dendritic cell function and in adaptive immunity. The protein is Lysosome-associated membrane glycoprotein 3 (LAMP3) of Macaca mulatta (Rhesus macaque).